Reading from the N-terminus, the 616-residue chain is Dihydroxy-acid dehydratase (616 aa).

Asp-81 is a binding site for Mg(2+). Position 122 (Cys-122) interacts with [2Fe-2S] cluster. Mg(2+) is bound by residues Asp-123 and Lys-124. Position 124 is an N6-carboxylysine (Lys-124). Cys-195 contacts [2Fe-2S] cluster. Residue Glu-491 coordinates Mg(2+). Catalysis depends on Ser-517, which acts as the Proton acceptor.

Belongs to the IlvD/Edd family. Homodimer. [2Fe-2S] cluster is required as a cofactor. The cofactor is Mg(2+).

The catalysed reaction is (2R)-2,3-dihydroxy-3-methylbutanoate = 3-methyl-2-oxobutanoate + H2O. The enzyme catalyses (2R,3R)-2,3-dihydroxy-3-methylpentanoate = (S)-3-methyl-2-oxopentanoate + H2O. It participates in amino-acid biosynthesis; L-isoleucine biosynthesis; L-isoleucine from 2-oxobutanoate: step 3/4. The protein operates within amino-acid biosynthesis; L-valine biosynthesis; L-valine from pyruvate: step 3/4. Its function is as follows. Functions in the biosynthesis of branched-chain amino acids. Catalyzes the dehydration of (2R,3R)-2,3-dihydroxy-3-methylpentanoate (2,3-dihydroxy-3-methylvalerate) into 2-oxo-3-methylpentanoate (2-oxo-3-methylvalerate) and of (2R)-2,3-dihydroxy-3-methylbutanoate (2,3-dihydroxyisovalerate) into 2-oxo-3-methylbutanoate (2-oxoisovalerate), the penultimate precursor to L-isoleucine and L-valine, respectively. The sequence is that of Dihydroxy-acid dehydratase from Escherichia coli (strain K12 / MC4100 / BW2952).